The chain runs to 420 residues: Methyltransferase/ribosomally synthesized cyclic peptide gymnopeptides precursor gymMA1 (420 aa).

Residues methionine 1–lysine 251 are methyltransferase domain. Catalysis depends on residues arginine 72, tyrosine 76, and tyrosine 98. Tyrosine 98, histidine 100, valine 103, alanine 130, glutamine 172, alanine 213, serine 244, and threonine 245 together coordinate S-adenosyl-L-methionine. The clasp domain stretch occupies residues glutamate 252–methionine 378. Residues proline 379–proline 392 are precursor leader. Valine 394 and valine 396 each carry N-methylvaline. Glycine 398 is modified (N-methylglycine). The residue at position 399 (valine 399) is an N-methylvaline. Alanine 400 bears the N-methylalanine mark. Residue glycine 402 is modified to N-methylglycine. N-methylvaline is present on residues valine 404, valine 406, valine 408, and valine 410.

This sequence in the N-terminal section; belongs to the precorrin methyltransferase family. As to quaternary structure, homodimer. GymMA1 automethylates at Val-394, Val-396, Gly-398, Val-399, Ala-400, Gly-402, Val-404, Val-406, Val-408 and Val-410 before being processed by a prolyloligopeptidase which likely forms a peptidyl ester upon removal of the follower propeptide, which then undergoes macrocyclization with the N-terminus of the modified core peptide. Peptide backbone alpha-N-methylations change the physicochemical properties of amide bonds to provide structural constraints and other favorable characteristics including biological membrane permeability to peptides.

The protein operates within mycotoxin biosynthesis. In terms of biological role, fusion protein of the methyltransferase gymM1 and the gymnopeptides precursor; part of the gene cluster that mediates the biosynthesis of gymnopeptides, highly methylated cyclic octadecapeptides with striking antiproliferative activity on several human cancer cell lines. Gymnopeptides derive from the C-terminus of the gymMA1 protein, and it is the gymMA1 protein that methylates its own C-terminus using S-adenosyl methionine (SAM). The C-terminus is subsequently cleaved off and macrocyclized by a prolyloligopeptidase to give the final product. The protein is Methyltransferase/ribosomally synthesized cyclic peptide gymnopeptides precursor gymMA1 of Gymnopus fusipes (Spindle toughshank).